The chain runs to 196 residues: Lipoprotein signal peptidase (196 aa).

The next 2 membrane-spanning stretches (helical) occupy residues 75–95 (IVFLITNTIIVCYLYYLMMSS) and 97–117 (TIGGFAGYSFVIGGAIGNLID). Catalysis depends on residues D126 and D144. Residues 135–155 (YSFPVFNLADCFITLGVIILV) traverse the membrane as a helical segment.

Belongs to the peptidase A8 family.

Its subcellular location is the cell inner membrane. It catalyses the reaction Release of signal peptides from bacterial membrane prolipoproteins. Hydrolyzes -Xaa-Yaa-Zaa-|-(S,diacylglyceryl)Cys-, in which Xaa is hydrophobic (preferably Leu), and Yaa (Ala or Ser) and Zaa (Gly or Ala) have small, neutral side chains.. Its pathway is protein modification; lipoprotein biosynthesis (signal peptide cleavage). Its function is as follows. This protein specifically catalyzes the removal of signal peptides from prolipoproteins. This Rickettsia bellii (strain OSU 85-389) protein is Lipoprotein signal peptidase.